The following is a 122-amino-acid chain: Large ribosomal subunit protein bL12 (122 aa).

Belongs to the bacterial ribosomal protein bL12 family. In terms of assembly, homodimer. Part of the ribosomal stalk of the 50S ribosomal subunit. Forms a multimeric L10(L12)X complex, where L10 forms an elongated spine to which 2 to 4 L12 dimers bind in a sequential fashion. Binds GTP-bound translation factors.

Its function is as follows. Forms part of the ribosomal stalk which helps the ribosome interact with GTP-bound translation factors. Is thus essential for accurate translation. The chain is Large ribosomal subunit protein bL12 from Shewanella putrefaciens (strain CN-32 / ATCC BAA-453).